The primary structure comprises 269 residues: Shikimate dehydrogenase (NADP(+)) (269 aa).

Residues 13-15 (SLS) and threonine 60 each bind shikimate. Catalysis depends on lysine 64, which acts as the Proton acceptor. Residue glutamate 76 participates in NADP(+) binding. Residues asparagine 85 and aspartate 100 each coordinate shikimate. NADP(+) is bound by residues 124-128 (GAGGA), 148-153 (NRTMSR), and isoleucine 209. Tyrosine 211 is a binding site for shikimate. Glycine 232 is an NADP(+) binding site. Glutamine 239 contributes to the shikimate binding site.

It belongs to the shikimate dehydrogenase family. In terms of assembly, monomer or homodimer.

It carries out the reaction shikimate + NADP(+) = 3-dehydroshikimate + NADPH + H(+). It participates in metabolic intermediate biosynthesis; chorismate biosynthesis; chorismate from D-erythrose 4-phosphate and phosphoenolpyruvate: step 4/7. Involved in the biosynthesis of the chorismate, which leads to the biosynthesis of aromatic amino acids. Catalyzes the reversible NADPH linked reduction of 3-dehydroshikimate (DHSA) to yield shikimate (SA). It can also use NAD to oxidize shikimate. In Staphylococcus epidermidis (strain ATCC 35984 / DSM 28319 / BCRC 17069 / CCUG 31568 / BM 3577 / RP62A), this protein is Shikimate dehydrogenase (NADP(+)).